A 172-amino-acid polypeptide reads, in one-letter code: Myosin regulatory light chain 2, smooth muscle minor isoform (172 aa).

Ser-2 bears the N-acetylserine mark. At Thr-19 the chain carries Phosphothreonine; by MLCK. Ser-20 bears the Phosphoserine; by MLCK mark. 3 EF-hand domains span residues Ser-29–Asn-64, Asp-98–Arg-133, and Phe-134–Asp-169. Asp-42, Asn-44, Asp-46, and Asp-53 together coordinate Ca(2+).

As to quaternary structure, myosin is a hexamer of 2 heavy chains and 4 light chains. Post-translationally, phosphorylation increases the actin-activated myosin ATPase activity and thereby regulates the contractile activity.

Myosin regulatory subunit that plays an important role in regulation of both smooth muscle and nonmuscle cell contractile activity. Implicated in cytokinesis, receptor capping, and cell locomotion. The polypeptide is Myosin regulatory light chain 2, smooth muscle minor isoform (Gallus gallus (Chicken)).